A 188-amino-acid chain; its full sequence is Josephin-2 (188 aa).

In terms of domain architecture, Josephin spans 11 to 188 (PPTVYHERQR…EEKGSWLRTD (178 aa)). Catalysis depends on cysteine 24, which acts as the Nucleophile. Residue histidine 125 is the Proton acceptor of the active site.

The protein localises to the cytoplasm. Its subcellular location is the cytosol. It carries out the reaction Thiol-dependent hydrolysis of ester, thioester, amide, peptide and isopeptide bonds formed by the C-terminal Gly of ubiquitin (a 76-residue protein attached to proteins as an intracellular targeting signal).. In terms of biological role, cleaves 'Lys-63'-linked poly-ubiquitin chains, and with lesser efficiency 'Lys-48'-linked poly-ubiquitin chains (in vitro). May act as a deubiquitinating enzyme. The chain is Josephin-2 (JOSD2) from Homo sapiens (Human).